A 335-amino-acid chain; its full sequence is MQALVNKIWYEGHPLRWLLLPFSVLFALITAIRRSLFRLGLKSQTALPVPVIVVGNITVGGSGKTPTVIYLIELLRQHGFNPGVISRGYGADIQGVKVVTAVDSAAAVGDEPAMIVARTSVPMVVGAKRVDTAKALLAEFAVDVIICDDGLQHYALGRDIELVVIDGKRGLGNRHLLPAGPLREGAWRLNQVDFVVVNGGPAQANQFEMQLSPSAVLPVNPKAEAVFNPTQPVVAMAGIGHPARFFETLTQQGIQLALSHGFDDHQAYDKHVLCELAASRPLMMTEKDAVKCRDFAQENWWYLAVDAKLSPQFDQQLLSRVRSVAAAKQGKSHGV.

Position 58–65 (58–65 (TVGGSGKT)) interacts with ATP.

Belongs to the LpxK family.

It catalyses the reaction a lipid A disaccharide + ATP = a lipid IVA + ADP + H(+). The protein operates within glycolipid biosynthesis; lipid IV(A) biosynthesis; lipid IV(A) from (3R)-3-hydroxytetradecanoyl-[acyl-carrier-protein] and UDP-N-acetyl-alpha-D-glucosamine: step 6/6. Functionally, transfers the gamma-phosphate of ATP to the 4'-position of a tetraacyldisaccharide 1-phosphate intermediate (termed DS-1-P) to form tetraacyldisaccharide 1,4'-bis-phosphate (lipid IVA). The polypeptide is Tetraacyldisaccharide 4'-kinase (Shewanella sp. (strain ANA-3)).